The sequence spans 408 residues: Aminoacylase-1 (408 aa).

Residue histidine 80 participates in Zn(2+) binding. Aspartate 82 is a catalytic residue. A Zn(2+)-binding site is contributed by aspartate 113. Catalysis depends on glutamate 147, which acts as the Proton acceptor. 3 residues coordinate Zn(2+): glutamate 148, glutamate 175, and histidine 373.

It belongs to the peptidase M20A family. As to quaternary structure, homodimer. Interacts with SPHK1. Zn(2+) serves as cofactor. Expression is highest in kidney, strong in brain and weaker in placenta and spleen.

Its subcellular location is the cytoplasm. It carries out the reaction an N-acyl-L-amino acid + H2O = an L-alpha-amino acid + a carboxylate. It catalyses the reaction N-acetyl-L-methionine + H2O = L-methionine + acetate. The enzyme catalyses N-acetyl-L-glutamine + H2O = L-glutamine + acetate. In terms of biological role, catalyzes the hydrolysis of N-acetylated amino acids to acetate and free amino acids. The protein is Aminoacylase-1 (ACY1) of Homo sapiens (Human).